The following is an 80-amino-acid chain: Waprin-Phi3 (80 aa).

The signal sequence occupies residues 1–22; the sequence is MKPWILLLLAGLLILSTQLTTA. The WAP domain maps to 31-78; that stretch reads PKVKPGECPKVKIPPDYPCNQYCVWDFDCEGNKKCCPVGCAKECFPPG. Intrachain disulfides connect Cys38-Cys66, Cys49-Cys70, Cys53-Cys65, and Cys59-Cys74.

This sequence belongs to the venom waprin family. As to expression, expressed by the venom gland.

It localises to the secreted. In terms of biological role, damages membranes of susceptible bacteria. Has no hemolytic activity. Not toxic to mice. Does not inhibit the proteinases elastase and cathepsin G. This chain is Waprin-Phi3, found in Philodryas olfersii (Green snake).